The sequence spans 343 residues: Methionine import ATP-binding protein MetN (343 aa).

An ABC transporter domain is found at 2–241; the sequence is IKLSNITKVF…PKTPLAQKFI (240 aa). 40–46 is a binding site for ATP; it reads SGAGKST. The interval 265–343 is C2 domain; sequence CVPMLRLEFT…HVKVEVLGYV (79 aa). L-methionine is bound by residues 278–283 and 295–296; these read VDAPLL and NI.

Belongs to the ABC transporter superfamily. Methionine importer (TC 3.A.1.24) family. As to quaternary structure, the complex is composed of two ATP-binding proteins (MetN), two transmembrane proteins (MetI) and a solute-binding protein (MetQ).

Its subcellular location is the cell inner membrane. The enzyme catalyses L-methionine(out) + ATP + H2O = L-methionine(in) + ADP + phosphate + H(+). It catalyses the reaction D-methionine(out) + ATP + H2O = D-methionine(in) + ADP + phosphate + H(+). With respect to regulation, ATPase activity is inhibited by intracellular L-methionine. Binding of methionine to the dimerized C-terminal regulatory domain stabilizes an inward-facing, ATPase-inactive conformation of the transporter, and as a consequence, the rate of ATP hydrolysis decreases. ADP is a competitive inhibitor. Part of the ABC transporter complex MetNIQ involved in methionine import. Responsible for energy coupling to the transport system. It has also been shown to be involved in formyl-L-methionine transport. This chain is Methionine import ATP-binding protein MetN, found in Escherichia coli (strain K12).